Reading from the N-terminus, the 363-residue chain is F-box protein At3g44326 (363 aa).

The tract at residues 1–23 (MLSSSSSSTVEQPSRGGSPGINA) is disordered. Residues 27–66 (DVLRSNILTRLDGSSLAALSCTCSNLNSFCSDESLWRQQC) form the F-box domain.

The protein is F-box protein At3g44326 of Arabidopsis thaliana (Mouse-ear cress).